A 142-amino-acid polypeptide reads, in one-letter code: Large ribosomal subunit protein uL13 (142 aa).

The protein belongs to the universal ribosomal protein uL13 family. In terms of assembly, part of the 50S ribosomal subunit.

Functionally, this protein is one of the early assembly proteins of the 50S ribosomal subunit, although it is not seen to bind rRNA by itself. It is important during the early stages of 50S assembly. This chain is Large ribosomal subunit protein uL13, found in Acholeplasma laidlawii (strain PG-8A).